The primary structure comprises 136 residues: MVTSVLSSVTISRVSSVLNRDVKQFGKQFLFDGREETCWNSDQGSCQWVLMEFPQNVLVSQIHLQFQGGFSCQTCALEGCYKDGELVKIADFYPEDTNTLQKFTFAEQSVSKLRVSFLNSTDFFGRITLYHLDVLG.

Belongs to the NR2C2AP family.

The protein localises to the nucleus. In terms of biological role, may act as a repressor of nr2c2-mediated transactivation by suppressing the binding between nr2c2 and its response element in target genes. The sequence is that of Nuclear receptor 2C2-associated protein (nr2c2ap) from Xenopus tropicalis (Western clawed frog).